We begin with the raw amino-acid sequence, 186 residues long: Ribosome-recycling factor (186 aa).

The protein belongs to the RRF family.

The protein resides in the cytoplasm. Responsible for the release of ribosomes from messenger RNA at the termination of protein biosynthesis. May increase the efficiency of translation by recycling ribosomes from one round of translation to another. In Burkholderia cenocepacia (strain HI2424), this protein is Ribosome-recycling factor.